We begin with the raw amino-acid sequence, 1404 residues long: G8 domain-containing protein DDB_G0286897 (1404 aa).

The N-terminal stretch at M1 to C20 is a signal peptide. Helical transmembrane passes span L97–A117 and I128–I148. Residues N352, N365, N413, N481, N639, N838, N979, N1003, N1017, N1253, and N1334 are each glycosylated (N-linked (GlcNAc...) asparagine). The 127-residue stretch at S553–T679 folds into the G8 domain.

It belongs to the comF family.

The protein localises to the membrane. The polypeptide is G8 domain-containing protein DDB_G0286897 (Dictyostelium discoideum (Social amoeba)).